A 366-amino-acid chain; its full sequence is Ubiquitin carboxyl-terminal hydrolase 46 (366 aa).

In terms of domain architecture, USP spans 35-365 (FGLVNFGNTC…SGYILFYQSR (331 aa)). Catalysis depends on cysteine 44, which acts as the Nucleophile. Zn(2+)-binding residues include cysteine 182, cysteine 185, cysteine 229, and cysteine 232. Histidine 313 serves as the catalytic Proton acceptor.

The protein belongs to the peptidase C19 family. USP12/USP46 subfamily. In terms of assembly, interacts with WDR48. Interacts with WDR20. Interacts with DMWD. Component of the USP46/WDR20/WDR48 deubiquitinating complex. In terms of tissue distribution, detected in lung and spleen, and at lower levels in brain, kidney, testis and liver.

It localises to the cytoplasm. The enzyme catalyses Thiol-dependent hydrolysis of ester, thioester, amide, peptide and isopeptide bonds formed by the C-terminal Gly of ubiquitin (a 76-residue protein attached to proteins as an intracellular targeting signal).. In terms of biological role, deubiquitinating enzyme that plays a role in behavior, possibly by regulating GABA action. May act by mediating the deubiquitination of GAD1/GAD67. Has almost no deubiquitinating activity by itself and requires the interaction with WDR48 to have a high activity. Not involved in deubiquitination of monoubiquitinated FANCD2. The sequence is that of Ubiquitin carboxyl-terminal hydrolase 46 from Rattus norvegicus (Rat).